Reading from the N-terminus, the 76-residue chain is Large ribosomal subunit protein bL31 (76 aa).

Zn(2+) is bound by residues cysteine 16, cysteine 18, cysteine 38, and cysteine 41.

This sequence belongs to the bacterial ribosomal protein bL31 family. Type A subfamily. As to quaternary structure, part of the 50S ribosomal subunit. Zn(2+) is required as a cofactor.

Functionally, binds the 23S rRNA. This chain is Large ribosomal subunit protein bL31, found in Nocardia farcinica (strain IFM 10152).